Reading from the N-terminus, the 370-residue chain is Histidinol-phosphate aminotransferase 1 (370 aa).

At lysine 222 the chain carries N6-(pyridoxal phosphate)lysine.

The protein belongs to the class-II pyridoxal-phosphate-dependent aminotransferase family. Histidinol-phosphate aminotransferase subfamily. As to quaternary structure, homodimer. Pyridoxal 5'-phosphate is required as a cofactor.

The catalysed reaction is L-histidinol phosphate + 2-oxoglutarate = 3-(imidazol-4-yl)-2-oxopropyl phosphate + L-glutamate. It participates in amino-acid biosynthesis; L-histidine biosynthesis; L-histidine from 5-phospho-alpha-D-ribose 1-diphosphate: step 7/9. The chain is Histidinol-phosphate aminotransferase 1 (hisC1) from Bacillus anthracis.